Reading from the N-terminus, the 643-residue chain is uncharacterized protein (643 aa).

Low complexity predominate over residues F179 to Q199. Disordered stretches follow at residues F179 to V200 and K349 to N377.

This is an uncharacterized protein from Caenorhabditis elegans.